We begin with the raw amino-acid sequence, 32 residues long: Ranatuerin-2La (32 aa).

The cysteines at positions 27 and 32 are disulfide-linked.

Expressed by the skin glands.

Its subcellular location is the secreted. Functionally, antibacterial activity against Gram-positive bacterium S.aureus and Gram-negative bacterium E.coli. Weak activity against C.albicans. This Rana luteiventris (Columbia spotted frog) protein is Ranatuerin-2La.